A 255-amino-acid chain; its full sequence is Proteasome subunit alpha type-3 (255 aa).

N-acetylserine is present on S2. N6-acetyllysine occurs at positions 57, 206, and 230. Phosphoserine occurs at positions 243 and 250.

Belongs to the peptidase T1A family. In terms of assembly, the 26S proteasome consists of a 20S proteasome core and two 19S regulatory subunits. The 20S proteasome core is a barrel-shaped complex made of 28 subunits that are arranged in four stacked rings. The two outer rings are each formed by seven alpha subunits, and the two inner rings are formed by seven beta subunits. The proteolytic activity is exerted by three beta-subunits PSMB5, PSMB6 and PSMB7. Interacts with AURKB. Interacts with CDKN1A. Interacts with MDM2 and RB1. Interacts with the C-terminus of TBXA2R isoform 2. Interacts with DNAJB2. As to quaternary structure, (Microbial infection) Interacts with HIV-1 Tat protein. (Microbial infection) Interacts with hepatitis C virus (HCV) F protein. In terms of assembly, (Microbial infection) Interacts with Epstein-Barr virus EBNA3 proteins.

It is found in the cytoplasm. Its subcellular location is the nucleus. In terms of biological role, component of the 20S core proteasome complex involved in the proteolytic degradation of most intracellular proteins. This complex plays numerous essential roles within the cell by associating with different regulatory particles. Associated with two 19S regulatory particles, forms the 26S proteasome and thus participates in the ATP-dependent degradation of ubiquitinated proteins. The 26S proteasome plays a key role in the maintenance of protein homeostasis by removing misfolded or damaged proteins that could impair cellular functions, and by removing proteins whose functions are no longer required. Associated with the PA200 or PA28, the 20S proteasome mediates ubiquitin-independent protein degradation. This type of proteolysis is required in several pathways including spermatogenesis (20S-PA200 complex) or generation of a subset of MHC class I-presented antigenic peptides (20S-PA28 complex). Binds to the C-terminus of CDKN1A and thereby mediates its degradation. Negatively regulates the membrane trafficking of the cell-surface thromboxane A2 receptor (TBXA2R) isoform 2. The protein is Proteasome subunit alpha type-3 of Homo sapiens (Human).